Reading from the N-terminus, the 384-residue chain is Urea transporter 1 (384 aa).

Residues 1-23 are disordered; the sequence is MDDNPTAVKLDQGGNQAPQGQGR. The next 5 membrane-spanning stretches (helical) occupy residues 61–81, 85–105, 111–131, 138–158, and 168–188; these read ISQV…VGLL, PWCA…ALLL, AITA…MAIY, FWWL…FSSA, and LPVF…ATGH. N-linked (GlcNAc...) asparagine glycosylation is present at Asn-206. 3 helical membrane-spanning segments follow: residues 237 to 257, 279 to 299, and 327 to 347; these read GGIF…HAAI, GLWG…FMAL, and VVGL…FLLL.

This sequence belongs to the urea transporter family. Homotrimer; each subunit contains a pore through which urea permeates. Identified in a complex with STOM.

It is found in the cell membrane. The protein resides in the basolateral cell membrane. The enzyme catalyses urea(in) = urea(out). Mediates the transport of urea driven by a concentration gradient across the cell membranes of erythrocytes and the renal inner medullary collecting duct which is critical to the urinary concentrating mechanism. Facilitates water transport in erythrocytes. The sequence is that of Urea transporter 1 (SLC14A1) from Capra hircus (Goat).